A 336-amino-acid chain; its full sequence is Serpentine receptor class gamma-13 (336 aa).

The next 8 membrane-spanning stretches (helical) occupy residues 32–52, 68–88, 93–113, 133–153, 156–176, 210–230, 246–266, and 277–297; these read LKYIIQVTLLSINFILNFLII, FFIIYAADLIMGMYMSLSEIL, FIYVTLLCPILAPYFFTPSIF, VFLSFNRMTCVVFPVGYSAIW, ILTPIIIVLFVLPIGIIWNVL, FIVSLILIIVISGVTLYALLI, TMVLSLEFSFLSVIQIYFAFF, and LLRVMYFTYDLLNFSTTIIFI.

Belongs to the nematode receptor-like protein srg family.

The protein localises to the membrane. This chain is Serpentine receptor class gamma-13 (srg-13), found in Caenorhabditis elegans.